A 155-amino-acid polypeptide reads, in one-letter code: UPF0225 protein ECA2332 (155 aa).

Belongs to the UPF0225 family.

This Pectobacterium atrosepticum (strain SCRI 1043 / ATCC BAA-672) (Erwinia carotovora subsp. atroseptica) protein is UPF0225 protein ECA2332.